The sequence spans 376 residues: Succinyl-diaminopimelate desuccinylase (376 aa).

Histidine 67 serves as a coordination point for Zn(2+). Aspartate 69 is a catalytic residue. Zn(2+) is bound at residue aspartate 100. The active-site Proton acceptor is glutamate 134. Zn(2+) is bound by residues glutamate 135, glutamate 163, and histidine 349.

The protein belongs to the peptidase M20A family. DapE subfamily. Homodimer. It depends on Zn(2+) as a cofactor. The cofactor is Co(2+).

It carries out the reaction N-succinyl-(2S,6S)-2,6-diaminopimelate + H2O = (2S,6S)-2,6-diaminopimelate + succinate. The protein operates within amino-acid biosynthesis; L-lysine biosynthesis via DAP pathway; LL-2,6-diaminopimelate from (S)-tetrahydrodipicolinate (succinylase route): step 3/3. In terms of biological role, catalyzes the hydrolysis of N-succinyl-L,L-diaminopimelic acid (SDAP), forming succinate and LL-2,6-diaminopimelate (DAP), an intermediate involved in the bacterial biosynthesis of lysine and meso-diaminopimelic acid, an essential component of bacterial cell walls. The protein is Succinyl-diaminopimelate desuccinylase of Pseudoalteromonas atlantica (strain T6c / ATCC BAA-1087).